Consider the following 128-residue polypeptide: Type-4 ice-structuring protein LS-12 (128 aa).

The signal sequence occupies residues 1 to 20 (MKFSLVATIVLLALAQGSFA). Position 21 is a pyrrolidone carboxylic acid (Gln-21).

It belongs to the apolipoprotein A1/A4/E family.

The protein resides in the secreted. Antifreeze proteins lower the blood freezing point. The sequence is that of Type-4 ice-structuring protein LS-12 from Myoxocephalus octodecemspinosus (Longhorn sculpin).